A 300-amino-acid chain; its full sequence is 1D-myo-inositol 2-acetamido-2-deoxy-alpha-D-glucopyranoside deacetylase (300 aa).

3 residues coordinate Zn(2+): H13, D16, and H147.

The protein belongs to the MshB deacetylase family. The cofactor is Zn(2+).

The catalysed reaction is 1D-myo-inositol 2-acetamido-2-deoxy-alpha-D-glucopyranoside + H2O = 1D-myo-inositol 2-amino-2-deoxy-alpha-D-glucopyranoside + acetate. Catalyzes the deacetylation of 1D-myo-inositol 2-acetamido-2-deoxy-alpha-D-glucopyranoside (GlcNAc-Ins) in the mycothiol biosynthesis pathway. This chain is 1D-myo-inositol 2-acetamido-2-deoxy-alpha-D-glucopyranoside deacetylase, found in Mycobacterium avium (strain 104).